The chain runs to 154 residues: Superoxide dismutase [Cu-Zn] (154 aa).

Residues H47, H49, and H64 each coordinate Cu cation. C58 and C147 are oxidised to a cystine. Positions 64, 72, 81, and 84 each coordinate Zn(2+). H121 contacts Cu cation. Substrate is bound at residue R144.

This sequence belongs to the Cu-Zn superoxide dismutase family. In terms of assembly, homodimer. Requires Cu cation as cofactor. It depends on Zn(2+) as a cofactor.

It is found in the cytoplasm. The protein resides in the mitochondrion. It localises to the cell membrane. The catalysed reaction is 2 superoxide + 2 H(+) = H2O2 + O2. Destroys radicals which are normally produced within the cells and which are toxic to biological systems. Destroys radicals produced by host defense mechanisms. This chain is Superoxide dismutase [Cu-Zn], found in Cryptococcus neoformans var. grubii serotype A (strain H99 / ATCC 208821 / CBS 10515 / FGSC 9487) (Filobasidiella neoformans var. grubii).